The following is a 559-amino-acid chain: Phosphatase and actin regulator 3 (559 aa).

The tract at residues 1–65 is disordered; the sequence is MAASEDGSGC…GIRTPPVRRN (65 aa). Polar residues predominate over residues 15 to 24; that stretch reads GRSQSDPSVL. A compositionally biased stretch (low complexity) spans 25 to 35; it reads TDSSATSSADA. Thr-70 is subject to Phosphothreonine. The tract at residues 82 to 342 is disordered; it reads KKKNEKLKQT…VERGKEREEA (261 aa). The RPEL 1 repeat unit spans residues 93-118; sequence SALEKKMAGRQGREELIKKGLLEMME. Residues 95–113 are compositionally biased toward basic and acidic residues; it reads LEKKMAGRQGREELIKKGL. The segment covering 134 to 151 has biased composition (polar residues); it reads SVQSEPPTPKSETLTSED. The span at 229–240 shows a compositional bias: pro residues; that stretch reads PSPPLLPTPPPK. Ser-230 carries the post-translational modification Phosphoserine. The residue at position 236 (Thr-236) is a Phosphothreonine. Polar residues-rich tracts occupy residues 248 to 262 and 270 to 281; these read NVTGQATLFQASSMK and GQLSTPTGSPHL. The span at 293–342 shows a compositional bias: basic and acidic residues; that stretch reads VIEELHRALATKHRQDSFQGRESKGSPKKRLDVRLSRTSSVERGKEREEA. Residues 346 to 369 adopt a coiled-coil conformation; it reads DGALENKRTAAKESEENKENLIIN. RPEL repeat units follow at residues 401–426, 439–464, and 477–502; these read ELLAVKLRNRPSKQELEDRNIFPRRT, MKLSKRLSQRPAVEELERRNILKQRN, and QRLTRKLNQRPTVDELRDRKILIRFS. The tract at residues 438-518 is required for PP1CA binding and inhibition of PP1 activity; sequence EMKLSKRLSQ…KAQDYDRRAD (81 aa). The stretch at 450 to 486 forms a coiled coil; sequence AVEELERRNILKQRNDQTEQEERREIKQRLTRKLNQR.

This sequence belongs to the phosphatase and actin regulator family. As to quaternary structure, binds actin and PPP1CA; thus inhibiting the protein phosphatase 1 (PP1) activity. Abundantly expressed in brain. Also found in several tumors such as lung carcinomas, nervous tumors and HL-60 leukemia cells. Isoform 3 is the major form in U-937, GOTO and HL-60 leukemia cells.

The protein resides in the nucleus matrix. The protein is Phosphatase and actin regulator 3 (PHACTR3) of Homo sapiens (Human).